Here is a 152-residue protein sequence, read N- to C-terminus: 3-dehydroquinate dehydratase (152 aa).

Catalysis depends on Y26, which acts as the Proton acceptor. Substrate is bound by residues N77, H83, and D90. The active-site Proton donor is the H103. Residues 104–105 (LS) and R114 contribute to the substrate site.

The protein belongs to the type-II 3-dehydroquinase family. Homododecamer.

The catalysed reaction is 3-dehydroquinate = 3-dehydroshikimate + H2O. The protein operates within metabolic intermediate biosynthesis; chorismate biosynthesis; chorismate from D-erythrose 4-phosphate and phosphoenolpyruvate: step 3/7. Catalyzes a trans-dehydration via an enolate intermediate. This is 3-dehydroquinate dehydratase (aroQ) from Synechocystis sp. (strain ATCC 27184 / PCC 6803 / Kazusa).